Reading from the N-terminus, the 125-residue chain is Interleukin-6 (125 aa).

Cysteines 16 and 26 form a disulfide.

It belongs to the IL-6 superfamily. Component of a hexamer of two molecules each of IL6, IL6R and IL6ST; first binds to IL6R to associate with the signaling subunit IL6ST. Interacts with IL6R (via the N-terminal ectodomain); this interaction may be affected by IL6R-binding with SORL1, hence decreasing IL6 cis signaling. Interacts with SORL1 (via the N-terminal ectodomain); this interaction leads to IL6 internalization and lysosomal degradation. May form a trimeric complex with the soluble SORL1 ectodomain and soluble IL6R receptor; this interaction might stabilize circulating IL6, hence promoting IL6 trans signaling.

The protein resides in the secreted. Functionally, cytokine with a wide variety of biological functions in immunity, tissue regeneration, and metabolism. Binds to IL6R, then the complex associates to the signaling subunit IL6ST/gp130 to trigger the intracellular IL6-signaling pathway. The interaction with the membrane-bound IL6R and IL6ST stimulates 'classic signaling', whereas the binding of IL6 and soluble IL6R to IL6ST stimulates 'trans-signaling'. Alternatively, 'cluster signaling' occurs when membrane-bound IL6:IL6R complexes on transmitter cells activate IL6ST receptors on neighboring receiver cells. In terms of biological role, IL6 is a potent inducer of the acute phase response. Rapid production of IL6 contributes to host defense during infection and tissue injury, but excessive IL6 synthesis is involved in disease pathology. In the innate immune response, is synthesized by myeloid cells, such as macrophages and dendritic cells, upon recognition of pathogens through toll-like receptors (TLRs) at the site of infection or tissue injury. In the adaptive immune response, is required for the differentiation of B cells into immunoglobulin-secreting cells. Plays a major role in the differentiation of CD4(+) T cell subsets. Essential factor for the development of T follicular helper (Tfh) cells that are required for the induction of germinal-center formation. Required to drive naive CD4(+) T cells to the Th17 lineage. Also required for proliferation of myeloma cells and the survival of plasmablast cells. Acts as an essential factor in bone homeostasis and on vessels directly or indirectly by induction of VEGF, resulting in increased angiogenesis activity and vascular permeability. Induces, through 'trans-signaling' and synergistically with IL1B and TNF, the production of VEGF. Involved in metabolic controls, is discharged into the bloodstream after muscle contraction increasing lipolysis and improving insulin resistance. 'Trans-signaling' in central nervous system also regulates energy and glucose homeostasis. Mediates, through GLP-1, crosstalk between insulin-sensitive tissues, intestinal L cells and pancreatic islets to adapt to changes in insulin demand. Also acts as a myokine. Plays a protective role during liver injury, being required for maintenance of tissue regeneration. Also has a pivotal role in iron metabolism by regulating HAMP/hepcidin expression upon inflammation or bacterial infection. Through activation of IL6ST-YAP-NOTCH pathway, induces inflammation-induced epithelial regeneration. The polypeptide is Interleukin-6 (IL6) (Neovison vison (American mink)).